A 458-amino-acid chain; its full sequence is Probable ECA polymerase (458 aa).

11 helical membrane passes run 3 to 23, 37 to 57, 65 to 85, 112 to 132, 154 to 174, 180 to 200, 201 to 221, 222 to 242, 340 to 360, 377 to 397, and 409 to 429; these read LAQF…VLTL, VFFS…TCLL, VVPV…YAIY, THLT…IFFL, GVAL…VYFL, AWFF…VIVG, GTRA…IVRG, WISL…MFWL, LVVM…GMII, YKAA…IVLA, and VFFC…YWLF.

This sequence belongs to the WzyE family. As to quaternary structure, probably part of a complex composed of WzxE, WzyE and WzzE.

It is found in the cell inner membrane. The protein operates within bacterial outer membrane biogenesis; enterobacterial common antigen biosynthesis. Functionally, probably involved in the polymerization of enterobacterial common antigen (ECA) trisaccharide repeat units. This is Probable ECA polymerase from Serratia proteamaculans (strain 568).